The following is a 231-amino-acid chain: LexA repressor (231 aa).

A DNA-binding region (H-T-H motif) is located at residues 26–46 (FEEMKEALDLKSKSGIHRLIG). Active-site for autocatalytic cleavage activity residues include Ser152 and Lys190.

Belongs to the peptidase S24 family. Homodimer.

The enzyme catalyses Hydrolysis of Ala-|-Gly bond in repressor LexA.. Functionally, represses a number of genes involved in the response to DNA damage (SOS response), including recA and lexA. In the presence of single-stranded DNA, RecA interacts with LexA causing an autocatalytic cleavage which disrupts the DNA-binding part of LexA, leading to derepression of the SOS regulon and eventually DNA repair. The chain is LexA repressor from Acidiphilium cryptum (strain JF-5).